A 459-amino-acid chain; its full sequence is Cysteine--tRNA ligase (459 aa).

Cys28 provides a ligand contact to Zn(2+). Positions 30–40 (VTVYDLCHIGH) match the 'HIGH' region motif. 3 residues coordinate Zn(2+): Cys209, His234, and Glu238. Residues 266–270 (KMSKS) carry the 'KMSKS' region motif. ATP is bound at residue Lys269.

It belongs to the class-I aminoacyl-tRNA synthetase family. As to quaternary structure, monomer. Zn(2+) serves as cofactor.

The protein localises to the cytoplasm. It catalyses the reaction tRNA(Cys) + L-cysteine + ATP = L-cysteinyl-tRNA(Cys) + AMP + diphosphate. The chain is Cysteine--tRNA ligase from Haemophilus influenzae (strain PittGG).